We begin with the raw amino-acid sequence, 318 residues long: D-alanine--D-alanine ligase B (318 aa).

Positions 117–315 (KQVWLSLGLS…FEALVWRVLE (199 aa)) constitute an ATP-grasp domain. 146–201 (AEQIGLPVIVKPANEGSSVGVSRVFDQAQLDEAVTLAARYDGALLMEQLIEGDELT) serves as a coordination point for ATP. Residues aspartate 268, glutamate 282, and asparagine 284 each contribute to the Mg(2+) site.

This sequence belongs to the D-alanine--D-alanine ligase family. It depends on Mg(2+) as a cofactor. Requires Mn(2+) as cofactor.

The protein localises to the cytoplasm. It catalyses the reaction 2 D-alanine + ATP = D-alanyl-D-alanine + ADP + phosphate + H(+). It participates in cell wall biogenesis; peptidoglycan biosynthesis. Functionally, cell wall formation. The protein is D-alanine--D-alanine ligase B of Xanthomonas campestris pv. campestris (strain ATCC 33913 / DSM 3586 / NCPPB 528 / LMG 568 / P 25).